Here is a 372-residue protein sequence, read N- to C-terminus: tRNA N6-adenosine threonylcarbamoyltransferase (372 aa).

Positions 133, 137, and 154 each coordinate a divalent metal cation. Substrate is bound by residues 154 to 158 (YVSGG), D186, G201, E205, and N301. D330 lines the a divalent metal cation pocket.

This sequence belongs to the KAE1 / TsaD family. In terms of assembly, component of the EKC/KEOPS complex composed of at least BUD32, CGI121, GON7, KAE1 and PCC1; the whole complex dimerizes. A divalent metal cation serves as cofactor.

It is found in the cytoplasm. It localises to the nucleus. It catalyses the reaction L-threonylcarbamoyladenylate + adenosine(37) in tRNA = N(6)-L-threonylcarbamoyladenosine(37) in tRNA + AMP + H(+). In terms of biological role, component of the EKC/KEOPS complex that is required for the formation of a threonylcarbamoyl group on adenosine at position 37 (t(6)A37) in tRNAs that read codons beginning with adenine. The complex is probably involved in the transfer of the threonylcarbamoyl moiety of threonylcarbamoyl-AMP (TC-AMP) to the N6 group of A37. KAE1 likely plays a direct catalytic role in this reaction, but requires other protein(s) of the complex to fulfill this activity. The EKC/KEOPS complex also promotes both telomere uncapping and telomere elongation. The complex is required for efficient recruitment of transcriptional coactivators. In Candida albicans (strain SC5314 / ATCC MYA-2876) (Yeast), this protein is tRNA N6-adenosine threonylcarbamoyltransferase.